A 225-amino-acid polypeptide reads, in one-letter code: Flagellar transcriptional regulator FlhC (225 aa).

The Zn(2+) site is built by Cys-149, Cys-152, Cys-169, and Cys-172.

The protein belongs to the FlhC family. In terms of assembly, heterohexamer composed of two FlhC and four FlhD subunits. Each FlhC binds a FlhD dimer, forming a heterotrimer, and a hexamer assembles by dimerization of two heterotrimers. Zn(2+) serves as cofactor.

It localises to the cytoplasm. Functionally, functions in complex with FlhD as a master transcriptional regulator that regulates transcription of several flagellar and non-flagellar operons by binding to their promoter region. Activates expression of class 2 flagellar genes, including fliA, which is a flagellum-specific sigma factor that turns on the class 3 genes. Also regulates genes whose products function in a variety of physiological pathways. The sequence is that of Flagellar transcriptional regulator FlhC from Burkholderia lata (strain ATCC 17760 / DSM 23089 / LMG 22485 / NCIMB 9086 / R18194 / 383).